The primary structure comprises 464 residues: uncharacterized protein (464 aa).

A signal peptide spans 1-24 (MSRFVPRIIPFYLLLLVAGGTANA).

Belongs to the intimin/invasin family.

It is found in the periplasm. This is an uncharacterized protein from Escherichia coli (strain K12).